The chain runs to 142 residues: Protein NIM1-INTERACTING 1 (142 aa).

Residues 47 to 53 (DTFFKLI) form an involved in NPR1/NIM1 interaction region. Positions 60-64 (RKRRR) match the Nuclear localization signal motif. 2 disordered regions span residues 63–86 (RREE…RSGI) and 108–142 (MFVS…NLAL). Residues 110–141 (VSDHKEENTKVEQEEDQTEERNEDKALDLNLA) adopt a coiled-coil conformation. Basic and acidic residues predominate over residues 111-121 (SDHKEENTKVE).

This sequence belongs to the NPR1-interactor family. Interacts with NPR1 C-terminal region.

Its subcellular location is the nucleus. This is Protein NIM1-INTERACTING 1 from Arabidopsis thaliana (Mouse-ear cress).